We begin with the raw amino-acid sequence, 390 residues long: GTPase Obg/CgtA (390 aa).

Positions 1 to 159 constitute an Obg domain; it reads MKFVDEAVIK…RDIRLELLLL (159 aa). Residues 160-333 enclose the OBG-type G domain; sequence ADVGMLGMPN…LCMKLAEFMD (174 aa). GTP contacts are provided by residues 166 to 173, 191 to 195, 213 to 216, 283 to 286, and 314 to 316; these read GMPNAGKS, FTTLV, DIPG, NKVD, and SAA. Residues Ser173 and Thr193 each contribute to the Mg(2+) site.

Belongs to the TRAFAC class OBG-HflX-like GTPase superfamily. OBG GTPase family. As to quaternary structure, monomer. Interacts with SpoT (AC Q9KNM2) in a yeast 2-hybrid assay. It depends on Mg(2+) as a cofactor.

It is found in the cytoplasm. Functionally, depletion experiments lead to gene down regulation and a dramatic increase in ppGpp levels, like those seen in the stringent response. There is no change in cell morphology in depletion experiments, but cells are very sensitive to the DNA-damaging agent hydroxyurea and are very elongated. Overexpression reduces growth and leads to elongated cells. Overexpression of proteins with C-terminal deletions of 29 or 62 amino acids showed fewer elongated cells. In terms of biological role, an essential GTPase which binds GTP, GDP and possibly (p)ppGpp with moderate affinity, with high nucleotide exchange rates and a fairly low GTP hydrolysis rate. It may play a role in control of the cell cycle, stress response, ribosome biogenesis and in those bacteria that undergo differentiation, in morphogenesis control. GTPase activity is stimulated by 50S ribosomal subunits. The protein is GTPase Obg/CgtA of Vibrio cholerae serotype O1 (strain ATCC 39315 / El Tor Inaba N16961).